The primary structure comprises 269 residues: Orotidine 5'-phosphate decarboxylase (269 aa).

K92 functions as the Proton donor in the catalytic mechanism.

It belongs to the OMP decarboxylase family. Type 2 subfamily.

It carries out the reaction orotidine 5'-phosphate + H(+) = UMP + CO2. It functions in the pathway pyrimidine metabolism; UMP biosynthesis via de novo pathway; UMP from orotate: step 2/2. The protein is Orotidine 5'-phosphate decarboxylase of Natronomonas pharaonis (strain ATCC 35678 / DSM 2160 / CIP 103997 / JCM 8858 / NBRC 14720 / NCIMB 2260 / Gabara) (Halobacterium pharaonis).